Consider the following 589-residue polypeptide: L-fucose isomerase (589 aa).

Residues E340 and D364 each act as proton acceptor in the active site. The Mn(2+) site is built by E340, D364, and H527.

This sequence belongs to the L-fucose isomerase family. It depends on Mn(2+) as a cofactor.

The protein localises to the cytoplasm. It carries out the reaction L-fucose = L-fuculose. It participates in carbohydrate degradation; L-fucose degradation; L-lactaldehyde and glycerone phosphate from L-fucose: step 1/3. In terms of biological role, converts the aldose L-fucose into the corresponding ketose L-fuculose. This is L-fucose isomerase from Haemophilus influenzae (strain ATCC 51907 / DSM 11121 / KW20 / Rd).